The sequence spans 347 residues: Phosphoribosylformylglycinamidine cyclo-ligase (347 aa).

The protein belongs to the AIR synthase family.

The protein resides in the cytoplasm. The catalysed reaction is 2-formamido-N(1)-(5-O-phospho-beta-D-ribosyl)acetamidine + ATP = 5-amino-1-(5-phospho-beta-D-ribosyl)imidazole + ADP + phosphate + H(+). The protein operates within purine metabolism; IMP biosynthesis via de novo pathway; 5-amino-1-(5-phospho-D-ribosyl)imidazole from N(2)-formyl-N(1)-(5-phospho-D-ribosyl)glycinamide: step 2/2. The polypeptide is Phosphoribosylformylglycinamidine cyclo-ligase (Alkalilimnicola ehrlichii (strain ATCC BAA-1101 / DSM 17681 / MLHE-1)).